Here is a 572-residue protein sequence, read N- to C-terminus: 2-succinyl-5-enolpyruvyl-6-hydroxy-3-cyclohexene-1-carboxylate synthase (572 aa).

This sequence belongs to the TPP enzyme family. MenD subfamily. In terms of assembly, homodimer. The cofactor is Mg(2+). Requires Mn(2+) as cofactor. Thiamine diphosphate serves as cofactor.

The enzyme catalyses isochorismate + 2-oxoglutarate + H(+) = 5-enolpyruvoyl-6-hydroxy-2-succinyl-cyclohex-3-ene-1-carboxylate + CO2. Its pathway is quinol/quinone metabolism; 1,4-dihydroxy-2-naphthoate biosynthesis; 1,4-dihydroxy-2-naphthoate from chorismate: step 2/7. The protein operates within quinol/quinone metabolism; menaquinone biosynthesis. Its function is as follows. Catalyzes the thiamine diphosphate-dependent decarboxylation of 2-oxoglutarate and the subsequent addition of the resulting succinic semialdehyde-thiamine pyrophosphate anion to isochorismate to yield 2-succinyl-5-enolpyruvyl-6-hydroxy-3-cyclohexene-1-carboxylate (SEPHCHC). The chain is 2-succinyl-5-enolpyruvyl-6-hydroxy-3-cyclohexene-1-carboxylate synthase from Aeromonas salmonicida (strain A449).